Consider the following 92-residue polypeptide: Muconolactone Delta-isomerase (92 aa).

This sequence belongs to the muconolactone Delta-isomerase family. As to quaternary structure, homodecamer.

The catalysed reaction is (S)-muconolactone = (4,5-dihydro-5-oxofuran-2-yl)-acetate. It participates in aromatic compound metabolism; beta-ketoadipate pathway; 5-oxo-4,5-dihydro-2-furylacetate from catechol: step 3/3. This chain is Muconolactone Delta-isomerase (catC), found in Cupriavidus pinatubonensis (strain JMP 134 / LMG 1197) (Cupriavidus necator (strain JMP 134)).